A 67-amino-acid polypeptide reads, in one-letter code: MTKTDYLMRLRKCTTIDTLERVIEKNKYELSDDELELFYSAADHRLAELTMNKLYDKIPPTVWQHVK.

Belongs to the Hha/YmoA/Cnu family. As to quaternary structure, interacts with H-NS, in the absence of DNA.

Functionally, modulates the thermoregulation of VirF, and hence the yop regulon, as well as the expression of the enterotoxin gene yst. Involved in chromosome structure and DNA topology probably by means of compaction of DNA in conjunction with H-NS; probably requires H-NS to bind DNA. The sequence is that of Modulating protein YmoA (ymoA) from Yersinia enterocolitica.